The sequence spans 141 residues: Nucleoside diphosphate kinase (141 aa).

ATP is bound by residues K11, F59, R87, T93, R104, and N114. Catalysis depends on H117, which acts as the Pros-phosphohistidine intermediate.

The protein belongs to the NDK family. Homotetramer. The cofactor is Mg(2+).

Its subcellular location is the cytoplasm. The catalysed reaction is a 2'-deoxyribonucleoside 5'-diphosphate + ATP = a 2'-deoxyribonucleoside 5'-triphosphate + ADP. It catalyses the reaction a ribonucleoside 5'-diphosphate + ATP = a ribonucleoside 5'-triphosphate + ADP. Its function is as follows. Major role in the synthesis of nucleoside triphosphates other than ATP. The ATP gamma phosphate is transferred to the NDP beta phosphate via a ping-pong mechanism, using a phosphorylated active-site intermediate. The polypeptide is Nucleoside diphosphate kinase (Ralstonia pickettii (strain 12J)).